The primary structure comprises 463 residues: Cysteine--tRNA ligase (463 aa).

Residue Cys-27 coordinates Zn(2+). A 'HIGH' region motif is present at residues Pro-29 to Asn-39. Residues Cys-207, His-232, and Glu-236 each coordinate Zn(2+). The 'KMSKS' region motif lies at Lys-264–Ser-268. An ATP-binding site is contributed by Lys-267.

This sequence belongs to the class-I aminoacyl-tRNA synthetase family. Monomer. The cofactor is Zn(2+).

The protein resides in the cytoplasm. It catalyses the reaction tRNA(Cys) + L-cysteine + ATP = L-cysteinyl-tRNA(Cys) + AMP + diphosphate. This chain is Cysteine--tRNA ligase, found in Pseudothermotoga lettingae (strain ATCC BAA-301 / DSM 14385 / NBRC 107922 / TMO) (Thermotoga lettingae).